A 226-amino-acid chain; its full sequence is Membrane protein (226 aa).

The Virion surface portion of the chain corresponds to 1–11 (MSNGSIPVDEV). Residues 12–32 (IEHLRNWNFTWNIILTILLVV) form a helical membrane-spanning segment. At 33–41 (LQYGHYKYS) the chain is on the intravirion side. A helical membrane pass occupies residues 42-62 (VFLYGVKMAILWILWPLVLAL). At 63–75 (SLFDAWASFQVNW) the chain is on the virion surface side. The chain crosses the membrane as a helical span at residues 76–96 (VFFAFSILMACITLMLWIMYF). Residues 97 to 226 (VNSIRLWRRT…TDSEKVLHLV (130 aa)) lie on the Intravirion side of the membrane. The segment at 200 to 216 (RSKHGDYSAVSNPSAVL) is interaction with N protein.

This sequence belongs to the alphacoronaviruses M protein family. Homomultimer. Interacts with envelope E protein in the budding compartment of the host cell, which is located between endoplasmic reticulum and the Golgi complex. Forms a complex with HE and S proteins. Interacts with nucleocapsid N protein. This interaction probably participates in RNA packaging into the virus.

It localises to the virion membrane. Its subcellular location is the host Golgi apparatus membrane. Component of the viral envelope that plays a central role in virus morphogenesis and assembly via its interactions with other viral proteins. This Sus scrofa (Pig) protein is Membrane protein.